The primary structure comprises 497 residues: MTDASKDIVSVRSLTKSYGATVVLKGVDFSVARGEIHALLGGNGAGKSTLIRVITGTAAKDGGELVFRDMAGNILTEADGRRKVAVVHQELALLPHLTVAESIALPHFRKGSRVYDGRTAGSQAYAALSMIDRDFAGTALNRLVGDLSLHEGQMVEIARALSSGAELILLDEPTANLTAAETERLFGVLRKLTRGNGLSVVFVSHRMKEIRQIAHVCSIIRDGRTVVGNVPTAELSDLAIIEHMGQAQATAVAHSARPAPVASLSDEPLTIAETGFSVTLQPGTILGVAGAPAGPETLIAALIGAAHERRWTVTRAGWPDRFRSPREAARLGAGFVTGDRSHRGILHSLPIIDNVLASRRATRGSLFATKREEVECLDLMQALKVKAGSLWHLPNTLSGGTQQKLLLARWLNVPSRLLVLEEPTRGVDIGTKREIYQLIRDMATTGTAIVWWSTENAELLEICDQVLAFDTEGRSSGVIERDELSEDKLATLTGMAA.

ABC transporter domains are found at residues 9-247 (VSVR…MGQA) and 256-496 (ARPA…TGMA). 41-48 (GGNGAGKS) contacts ATP.

Belongs to the ABC transporter superfamily. Ribose importer (TC 3.A.1.2.1) family.

It is found in the cell membrane. In terms of biological role, probably part of the binding-protein-dependent transport system y4mIJK. This system probably transports a sugar. Probably responsible for energy coupling to the transport system. This is an uncharacterized protein from Sinorhizobium fredii (strain NBRC 101917 / NGR234).